The chain runs to 169 residues: Large ribosomal subunit protein uL10 (169 aa).

It belongs to the universal ribosomal protein uL10 family. As to quaternary structure, part of the ribosomal stalk of the 50S ribosomal subunit. The N-terminus interacts with L11 and the large rRNA to form the base of the stalk. The C-terminus forms an elongated spine to which L12 dimers bind in a sequential fashion forming a multimeric L10(L12)X complex.

Functionally, forms part of the ribosomal stalk, playing a central role in the interaction of the ribosome with GTP-bound translation factors. This chain is Large ribosomal subunit protein uL10, found in Rickettsia rickettsii (strain Iowa).